A 257-amino-acid chain; its full sequence is uncharacterized protein (257 aa).

Residues Ile6–Phe26 form a helical membrane-spanning segment.

This sequence belongs to the staphylococcal tandem lipoprotein family.

The protein localises to the cell membrane. This is an uncharacterized protein from Staphylococcus aureus (strain NCTC 8325 / PS 47).